The following is a 471-amino-acid chain: Abscission/NoCut checkpoint regulator (471 aa).

Residues 39 to 64 (GGAGQGREGRSWGEGPRGPGLGRRDL) form a disordered region. Residues 74–133 (ATMESRCYGCAVKFTLFKKEYGCKNCGRAFCSGCLSFSAAVPRTGNTQQKVCKQCHEVLT) form an FYVE-type zinc finger. Residues Cys-80, Cys-83, Cys-96, Cys-99, Cys-104, Cys-107, Cys-125, and Cys-128 each coordinate Zn(2+). At Ser-144 the chain carries Phosphoserine. Positions 174-187 (DQMIAERLARLRQE) match the MIM1-A motif. A Glycyl lysine isopeptide (Lys-Gly) (interchain with G-Cter in SUMO2) cross-link involves residue Lys-207. Thr-243 carries the phosphothreonine modification. The segment at 271-299 (KGGGPAASLQNDLNQGGPGSTNSKRQANW) is disordered. The segment covering 278–299 (SLQNDLNQGGPGSTNSKRQANW) has biased composition (polar residues). Phosphoserine is present on residues Gly-286 and Ser-293. Residues 311-375 (EAALELREEN…RVLQQLTEEA (65 aa)) adopt a coiled-coil conformation. The short motif at 326-339 (ILALAKRLAMLRGQ) is the MIM1-B element. Ser-354 bears the Phosphoserine mark. The interval 386–412 (PAEQASRPWTQPRGAEPEAQDVDPRPE) is disordered. Ser-463 bears the Phosphoserine mark.

In terms of assembly, interacts (via MIM1-B) with VPS4A; interaction takes place at the midbody ring following cytokinesis checkpoint activation. Post-translationally, phosphorylated in vitro at Ser-22 by AURKB; however, phosphorylation at this site could not be confirmed in vivo. In terms of tissue distribution, detected in brain, heart, skeletal muscle and kidney. Expressed in the liver (at protein level).

It localises to the cytoplasm. The protein localises to the cytoskeleton. The protein resides in the microtubule organizing center. It is found in the centrosome. Its subcellular location is the cleavage furrow. It localises to the midbody. The protein localises to the midbody ring. Its function is as follows. Key regulator of abscission step in cytokinesis: part of the cytokinesis checkpoint, a process required to delay abscission to prevent both premature resolution of intercellular chromosome bridges and accumulation of DNA damage. Together with CHMP4C, required to retain abscission-competent VPS4 (VPS4A and/or VPS4B) at the midbody ring until abscission checkpoint signaling is terminated at late cytokinesis. Deactivation of AURKB results in dephosphorylation of CHMP4C followed by its dissociation from ZFYVE19/ANCHR and VPS4 and subsequent abscission. This chain is Abscission/NoCut checkpoint regulator (ZFYVE19), found in Homo sapiens (Human).